A 173-amino-acid polypeptide reads, in one-letter code: Cytochrome b6-f complex subunit 4, chloroplastic (173 aa).

The transit peptide at 1–14 (ESALERRSSSVVMN) directs the protein to the chloroplast. 3 consecutive transmembrane segments (helical) span residues 49-69 (LLYM…GLAV), 108-128 (LLGV…PFIE), and 144-164 (SVFL…TLPI).

This sequence belongs to the cytochrome b family. PetD subfamily. As to quaternary structure, the 4 large subunits of the cytochrome b6-f complex are cytochrome b6, subunit IV (17 kDa polypeptide, petD), cytochrome f and the Rieske protein, while the 4 small subunits are petG, petL, petM and petN. The complex functions as a dimer.

Its subcellular location is the plastid. The protein localises to the chloroplast thylakoid membrane. Functionally, component of the cytochrome b6-f complex, which mediates electron transfer between photosystem II (PSII) and photosystem I (PSI), cyclic electron flow around PSI, and state transitions. This Euglena gracilis protein is Cytochrome b6-f complex subunit 4, chloroplastic.